A 500-amino-acid chain; its full sequence is Signal transduction histidine-protein kinase/phosphatase UhpB (500 aa).

The next 8 helical transmembrane spans lie at 8–28, 78–98, 112–132, 140–160, 185–205, 207–224, 231–249, and 253–273; these read LITVVACFFIFSAAWFCLWSI, VALAHLPLLMIGSVLTLLPVA, LLLQGAALTAAALLQSLPWLG, ALLLTLTGGLTLAPICLVFWH, HLIWYLLLFIVSLWLQLGLPA, LSRFTPFCLALPIIALAW, ALIATLMNAIALIASQTWH, and VDLLLSLLAQSLTGLLLGAGI. The Cytoplasmic segment spans residues 274–500; it reads QRLRELNQSL…VSVSLPQRYV (227 aa). One can recognise a Histidine kinase domain in the interval 311-499; sequence ELHDDIGQTI…RVSVSLPQRY (189 aa). At His-313 the chain carries Phosphohistidine; by autocatalysis.

Autophosphorylated.

Its subcellular location is the cell inner membrane. The catalysed reaction is ATP + protein L-histidine = ADP + protein N-phospho-L-histidine.. Part of the UhpABC signaling cascade that controls the expression of the hexose phosphate transporter UhpT. UhpB functions as a membrane-associated protein kinase that autophosphorylates in response to interaction with UhpC, and subsequently transfers its phosphate group to the response regulator UhpA. Can also dephosphorylate UhpA. The polypeptide is Signal transduction histidine-protein kinase/phosphatase UhpB (uhpB) (Salmonella typhimurium (strain LT2 / SGSC1412 / ATCC 700720)).